Consider the following 268-residue polypeptide: MAEKSFDNWKKIVVKVGTSTIVQENSQINLPIIGQLVQTLCALRNQNREVVFVTSGAVGVAINQLGFKERPNEIPRQQALAAIGQADLMAIYNQNFSFYHQITGQILLTYDVFDNPKMLENMLNALRELLKMKAIPIINENDVIAVDEMDHQHSFGDNDCLAAMVTKIIDADGLIILSDVDALYDRNPHEFANAKAIKRVGSITKQVINLASGKSNLGKGGMLTKLKAAKYLLKNDKQMLLLPGSEPDGILKALSGQEIGTLFANEYK.

An ATP-binding site is contributed by Lys-15. Residues Ser-55, Asp-142, and Asn-158 each coordinate substrate. 178–179 (SD) serves as a coordination point for ATP.

This sequence belongs to the glutamate 5-kinase family.

It is found in the cytoplasm. The enzyme catalyses L-glutamate + ATP = L-glutamyl 5-phosphate + ADP. It participates in amino-acid biosynthesis; L-proline biosynthesis; L-glutamate 5-semialdehyde from L-glutamate: step 1/2. Catalyzes the transfer of a phosphate group to glutamate to form L-glutamate 5-phosphate. The polypeptide is Glutamate 5-kinase (Oenococcus oeni (strain ATCC BAA-331 / PSU-1)).